The chain runs to 65 residues: Small ribosomal subunit protein eS27 (65 aa).

Positions 21, 24, 40, and 43 each coordinate Zn(2+). The segment at Cys21 to Cys43 adopts a C4-type zinc-finger fold.

This sequence belongs to the eukaryotic ribosomal protein eS27 family. In terms of assembly, part of the 30S ribosomal subunit. The cofactor is Zn(2+).

The chain is Small ribosomal subunit protein eS27 from Thermoplasma volcanium (strain ATCC 51530 / DSM 4299 / JCM 9571 / NBRC 15438 / GSS1).